The chain runs to 423 residues: FAD-dependent monooxygenase asL6 (423 aa).

FAD is bound by residues 10–13 (AGVA), 34–35 (ER), arginine 108, tyrosine 290, and aspartate 312. The chain crosses the membrane as a helical span at residues 371–391 (GMGMFQSKFGVGVFYVLLAII).

This sequence belongs to the aromatic-ring hydroxylase family. The cofactor is FAD.

It is found in the membrane. It participates in secondary metabolite biosynthesis; terpenoid biosynthesis. FAD-dependent monooxygenase; part of the gene cluster that mediates the biosynthesis of xenovulene A, an unusual meroterpenoid that has potent inhibitory effects on the human gamma-aminobutyrate A (GABAA) benzodiazepine receptor. The first step of xenovulene A biosynthesis is the biosynthesis of 3-methylorcinaldehyde performed by the non-reducing polyketide synthase aspks1. The salicylate hydroxylase asL1 then catalyzes the oxidative dearomatization of 3-methylorcinaldehyde to yield a dearomatized hydroxycyclohexadione. The 2-oxoglutarate-dependent dioxygenase asL3 further catalyzes the oxidative ring expansion to provide the first tropolone metabolite. The cytochrome P450 monooxygenase asR2 allows the synthesis of tropolone hemiacetal. In parallel, a previously unrecognised class of terpene cyclase, asR6, produces alpha-humulene from farnesylpyrophosphate (FPP). The putative Diels-Alderase asR5 probably catalyzes the formation of the tropolone-humulene skeleton by linking humulene and the polyketide moiety. Oxidative-ring contractions catalyzed by asL4 and asL6 then processively remove carbon atoms from the polyketide to yield xenovulene A. The polypeptide is FAD-dependent monooxygenase asL6 (Sarocladium schorii (Acremonium strictum (strain IMI 501407))).